The sequence spans 244 residues: MDKKLHSVSPESGPNSNLDLTPQLAQSSSAFLFEPKNIVPFETALGWQKNFLKNLIEEPFSPQAVWLLEHFSCFTMGRGSDKKNLLFEENNSPLPVFSIERGGEVTHHMPGQIVGYLVLNLSLHKKDLAWYLRELEQVLIDVLDLLGIEGKRVDGLTGVWCEDKKVGSIGIGCKRWVTQHGFSLNVDCDLIGFEKIIPCGLDKVKVGKLSDWIPGIKVCDVTPLLRESVKRRFKLNWEKINQSL.

Residues 1 to 21 (MDKKLHSVSPESGPNSNLDLT) are disordered. Positions 9 to 21 (SPESGPNSNLDLT) are enriched in polar residues. The BPL/LPL catalytic domain maps to 59–244 (PFSPQAVWLL…LNWEKINQSL (186 aa)). Residues 101-108 (RGGEVTHH), 168-170 (SIG), and 181-183 (GFS) each bind substrate. The active-site Acyl-thioester intermediate is the C199.

It belongs to the LipB family.

It is found in the cytoplasm. It carries out the reaction octanoyl-[ACP] + L-lysyl-[protein] = N(6)-octanoyl-L-lysyl-[protein] + holo-[ACP] + H(+). It functions in the pathway protein modification; protein lipoylation via endogenous pathway; protein N(6)-(lipoyl)lysine from octanoyl-[acyl-carrier-protein]: step 1/2. In terms of biological role, catalyzes the transfer of endogenously produced octanoic acid from octanoyl-acyl-carrier-protein onto the lipoyl domains of lipoate-dependent enzymes. Lipoyl-ACP can also act as a substrate although octanoyl-ACP is likely to be the physiological substrate. This Prochlorococcus marinus (strain NATL1A) protein is Octanoyltransferase.